We begin with the raw amino-acid sequence, 282 residues long: MAKNKKLFEYLSQHAETISSTWYETIEETDPNSIYASTDPVVIHNLKSQNLAFNYKINRIFIDDEDVYLPILKEWAFEVTQDQEHLKTPIHYIIREFVRVRDLYVSYVKEFVHLNQNTVKSEEAEDLYHALIKAFDLVIHIFIEEMYKNTSLQLQAQKDMITELSAPVIVLFHSVGLLPLIGDIDTVRAKLIMENTLHQCAKKKVTQLYIDLSGVAVIDTMVAHQLFSLIEALRLIGVSSTLSGIRPEIAQTAVQLGLSFEGISLRSTLASAIASDLKLKKV.

Residues Ser-165 and Ser-174 each carry the phosphoserine modification. Residues 165–276 enclose the STAS domain; sequence SAPVIVLFHS…STLASAIASD (112 aa). Thr-186 carries the phosphothreonine modification.

In terms of assembly, probably present in the stressosome with RsbRA, RsbRB, RsbRD and RsbS. Phosphorylated by RsbT.

In terms of biological role, one of 4 functionally non-identical RsbR paralogs, it functions in the environmental signaling branch of the general stress response. Negative regulator of sigma-B activity. Non-phosphorylated RsbS binds to RsbT, preventing its association with RsbU. Requires any one of RsbRA, RsbRB, RsbRC or RsbRD to sequester RsbT. When RsbS and the RsbR paralog(s) are phosphorylated, they release RsbT, which can then bind and activate RsbU. This is RsbT co-antagonist protein RsbRC (rsbRC) from Bacillus subtilis (strain 168).